Here is a 510-residue protein sequence, read N- to C-terminus: Ectonucleoside triphosphate diphosphohydrolase 1 (510 aa).

At 1-16 the chain is on the cytoplasmic side; the sequence is MEDIKDSKVKRFCSKN. Residues 17 to 37 form a helical membrane-spanning segment; it reads ILIILGFTSILAVIALIAVGL. The Extracellular portion of the chain corresponds to 38-478; that stretch reads TQNKPLPENV…SPPLPHSTYI (441 aa). The N-linked (GlcNAc...) asparagine glycan is linked to Asn73. An intrachain disulfide couples Cys84 to Cys108. Residue Glu174 is the Proton acceptor of the active site. Residues Asn226, Asn291, and Asn333 are each glycosylated (N-linked (GlcNAc...) asparagine). 2 disulfides stabilise this stretch: Cys254–Cys300 and Cys281–Cys324. Disulfide bonds link Cys337/Cys342 and Cys391/Cys414. N-linked (GlcNAc...) asparagine glycans are attached at residues Asn428 and Asn457. Residues 479–499 traverse the membrane as a helical segment; sequence GLMVLFSLLLVAVAITGLFIY. The Cytoplasmic portion of the chain corresponds to 500–510; sequence SKPSYFWKEAV.

Belongs to the GDA1/CD39 NTPase family. As to quaternary structure, homodimer; disulfide-linked. Requires Ca(2+) as cofactor. The cofactor is Mg(2+). N-glycosylated. In terms of processing, the N-terminus is blocked. Post-translationally, palmitoylated on Cys-13; which is required for caveola targeting.

The protein resides in the membrane. Its subcellular location is the caveola. The catalysed reaction is a ribonucleoside 5'-triphosphate + 2 H2O = a ribonucleoside 5'-phosphate + 2 phosphate + 2 H(+). It catalyses the reaction a ribonucleoside 5'-triphosphate + H2O = a ribonucleoside 5'-diphosphate + phosphate + H(+). It carries out the reaction a ribonucleoside 5'-diphosphate + H2O = a ribonucleoside 5'-phosphate + phosphate + H(+). The enzyme catalyses ATP + 2 H2O = AMP + 2 phosphate + 2 H(+). The catalysed reaction is ATP + H2O = ADP + phosphate + H(+). It catalyses the reaction ADP + H2O = AMP + phosphate + H(+). It carries out the reaction CTP + 2 H2O = CMP + 2 phosphate + 2 H(+). The enzyme catalyses CTP + H2O = CDP + phosphate + H(+). The catalysed reaction is CDP + H2O = CMP + phosphate + H(+). It catalyses the reaction GTP + 2 H2O = GMP + 2 phosphate + 2 H(+). It carries out the reaction GTP + H2O = GDP + phosphate + H(+). The enzyme catalyses GDP + H2O = GMP + phosphate + H(+). The catalysed reaction is ITP + 2 H2O = IMP + 2 phosphate + 2 H(+). It catalyses the reaction ITP + H2O = IDP + phosphate + H(+). It carries out the reaction IDP + H2O = IMP + phosphate + H(+). The enzyme catalyses UTP + 2 H2O = UMP + 2 phosphate + 2 H(+). The catalysed reaction is UTP + H2O = UDP + phosphate + H(+). It catalyses the reaction UDP + H2O = UMP + phosphate + H(+). Functionally, catalyzes the hydrolysis of both di- and triphosphate nucleotides (NDPs and NTPs) and hydrolyze NTPs to nucleotide monophosphates (NMPs) in two distinct successive phosphate-releasing steps, with NDPs as intermediates and participates in the regulation of extracellular levels of nucleotides. By hydrolyzing proinflammatory ATP and platelet-activating ADP to AMP, it blocks platelet aggregation and supports blood flow. The polypeptide is Ectonucleoside triphosphate diphosphohydrolase 1 (Mus musculus (Mouse)).